The sequence spans 77 residues: MAQQRRGGRRRKVDYIAANHIDYVDYKDVDLLKRFISERGKILPRRVTGTSAKNQRKVANAIKRARIMGLLPFVAED.

This sequence belongs to the bacterial ribosomal protein bS18 family. As to quaternary structure, part of the 30S ribosomal subunit. Forms a tight heterodimer with protein bS6.

Its function is as follows. Binds as a heterodimer with protein bS6 to the central domain of the 16S rRNA, where it helps stabilize the platform of the 30S subunit. This chain is Small ribosomal subunit protein bS18, found in Lactobacillus helveticus (strain DPC 4571).